A 118-amino-acid polypeptide reads, in one-letter code: Large ribosomal subunit protein uL18 (118 aa).

This sequence belongs to the universal ribosomal protein uL18 family. As to quaternary structure, part of the 50S ribosomal subunit; part of the 5S rRNA/L5/L18/L25 subcomplex. Contacts the 5S and 23S rRNAs.

Its function is as follows. This is one of the proteins that bind and probably mediate the attachment of the 5S RNA into the large ribosomal subunit, where it forms part of the central protuberance. This Caulobacter sp. (strain K31) protein is Large ribosomal subunit protein uL18.